Consider the following 190-residue polypeptide: Elongation factor P-like protein (190 aa).

Belongs to the elongation factor P family.

This chain is Elongation factor P-like protein, found in Cronobacter sakazakii (strain ATCC BAA-894) (Enterobacter sakazakii).